Consider the following 521-residue polypeptide: Occludin (521 aa).

Over 1–66 the chain is Cytoplasmic; sequence MSSRPFESPP…KWTSPPGVIR (66 aa). Residues 60 to 268 enclose the MARVEL domain; it reads SPPGVIRILS…IIFFAVKTRR (209 aa). Residues 67 to 89 traverse the membrane as a helical segment; that stretch reads ILSMLVIVMCIAIFGCVASTLAW. The Extracellular portion of the chain corresponds to 90–134; the sequence is DRGYGTGLMGGSIGYPYGSGFGSYGTGYGYGFGYGYGYGGYTDPR. Residues 135–159 traverse the membrane as a helical segment; sequence AAKGFLLAMVAFCFIAALVIFVTSV. Topologically, residues 160–169 are cytoplasmic; the sequence is IRSDISRTRR. Residues 170-194 form a helical membrane-spanning segment; it reads YYLTVIILSAFLGVMMFIATIVYIM. Residues 195-242 are Extracellular-facing; sequence GVNPTAQASGSLYSSQIYAMCNQFYASTATGLYMDQYLYHYCVVDPQE. C215 and C236 are oxidised to a cystine. The chain crosses the membrane as a helical span at residues 243-264; the sequence is AIAIVLGFMVIVAFALIIFFAV. Residues 265–521 lie on the Cytoplasmic side of the membrane; it reads KTRRKMDRYD…MVGDYDRQKT (257 aa). S301 carries the phosphoserine modification. The disordered stretch occupies residues 301-407; the sequence is SAGTQDMPPP…ETDYTTGGES (107 aa). T304 carries the phosphothreonine modification. S312, S320, and S339 each carry phosphoserine. The residue at position 367 (Y367) is a Phosphotyrosine. Phosphoserine occurs at positions 368 and 369. Basic residues predominate over residues 380–389; the sequence is APSKGRTGRP. Basic and acidic residues predominate over residues 390 to 399; it reads KRLEQDHYET. A phosphotyrosine mark is found at Y397 and Y401. 2 positions are modified to phosphothreonine; by PKC/PRKCH: T402 and T403. S407 bears the Phosphoserine mark. The OCEL domain occupies 413-521; sequence EDWIREYPPI…MVGDYDRQKT (109 aa). A coiled-coil region spans residues 424–488; sequence SDQQRQLYKR…EYNRLKQVKG (65 aa). The residue at position 489 (S489) is a Phosphoserine.

The protein belongs to the ELL/occludin family. As to quaternary structure, interacts with TJP1/ZO1. Interacts with VAPA. Interacts with CLDN1, CLDN6, CLDN9, CLDN11, CLDN12 and CLDN17. Interacts with PLSCR1. Interacts with LSR, ILDR1 and ILDR2. Interacts with TJP2/ZO2. In terms of processing, dephosphorylated by PTPRJ. Less-phosphorylated forms are found in basolateral membrane, cytosol and tight junction. More-heavily phosphorylated forms are concentrated exclusively in tight junction. As to expression, localized at tight junctions of both epithelial and endothelial cells.

The protein localises to the cell membrane. The protein resides in the cell junction. It localises to the tight junction. Its function is as follows. May play a role in the formation and regulation of the tight junction (TJ) paracellular permeability barrier. Interacts with ZO-1. The protein is Occludin (OCLN) of Canis lupus familiaris (Dog).